A 207-amino-acid polypeptide reads, in one-letter code: Small ribosomal subunit protein uS4 (207 aa).

The interval 20–45 (TPKAARYMEKRPYAPGEHGRTKRKAD) is disordered. In terms of domain architecture, S4 RNA-binding spans 93-158 (MRLDALVLRA…TEPFQVAAAG (66 aa)).

Belongs to the universal ribosomal protein uS4 family. Part of the 30S ribosomal subunit. Contacts protein S5. The interaction surface between S4 and S5 is involved in control of translational fidelity.

Functionally, one of the primary rRNA binding proteins, it binds directly to 16S rRNA where it nucleates assembly of the body of the 30S subunit. In terms of biological role, with S5 and S12 plays an important role in translational accuracy. This Leifsonia xyli subsp. xyli (strain CTCB07) protein is Small ribosomal subunit protein uS4.